Consider the following 481-residue polypeptide: tRNA-2-methylthio-N(6)-dimethylallyladenosine synthase (481 aa).

An MTTase N-terminal domain is found at 24-140; that stretch reads KKLFIESYGC…LPNLLAEVEE (117 aa). [4Fe-4S] cluster contacts are provided by C33, C69, C103, C178, C182, and C185. Positions 164-411 constitute a Radical SAM core domain; the sequence is MSNGITALVS…DLQQKHAWFR (248 aa). One can recognise a TRAM domain in the interval 413–476; it reads EEFVGKTVEV…SGTLKGEAVG (64 aa).

It belongs to the methylthiotransferase family. MiaB subfamily. In terms of assembly, monomer. It depends on [4Fe-4S] cluster as a cofactor.

It localises to the cytoplasm. It catalyses the reaction N(6)-dimethylallyladenosine(37) in tRNA + (sulfur carrier)-SH + AH2 + 2 S-adenosyl-L-methionine = 2-methylsulfanyl-N(6)-dimethylallyladenosine(37) in tRNA + (sulfur carrier)-H + 5'-deoxyadenosine + L-methionine + A + S-adenosyl-L-homocysteine + 2 H(+). Functionally, catalyzes the methylthiolation of N6-(dimethylallyl)adenosine (i(6)A), leading to the formation of 2-methylthio-N6-(dimethylallyl)adenosine (ms(2)i(6)A) at position 37 in tRNAs that read codons beginning with uridine. This Flavobacterium johnsoniae (strain ATCC 17061 / DSM 2064 / JCM 8514 / BCRC 14874 / CCUG 350202 / NBRC 14942 / NCIMB 11054 / UW101) (Cytophaga johnsonae) protein is tRNA-2-methylthio-N(6)-dimethylallyladenosine synthase.